Consider the following 262-residue polypeptide: Shikimate dehydrogenase (NADP(+)) (262 aa).

Shikimate contacts are provided by residues 15–17 (SRS) and Thr-62. Catalysis depends on Lys-66, which acts as the Proton acceptor. Glu-78 is a binding site for NADP(+). Residues Asn-87 and Asp-102 each contribute to the shikimate site. NADP(+) contacts are provided by residues 126 to 130 (GAGGA), 150 to 155 (NRTLAR), and Met-214. Shikimate is bound at residue Tyr-216. Gly-236 is a binding site for NADP(+).

Belongs to the shikimate dehydrogenase family. Homodimer.

It catalyses the reaction shikimate + NADP(+) = 3-dehydroshikimate + NADPH + H(+). It functions in the pathway metabolic intermediate biosynthesis; chorismate biosynthesis; chorismate from D-erythrose 4-phosphate and phosphoenolpyruvate: step 4/7. Its function is as follows. Involved in the biosynthesis of the chorismate, which leads to the biosynthesis of aromatic amino acids. Catalyzes the reversible NADPH linked reduction of 3-dehydroshikimate (DHSA) to yield shikimate (SA). The sequence is that of Shikimate dehydrogenase (NADP(+)) from Acinetobacter baumannii (strain SDF).